We begin with the raw amino-acid sequence, 283 residues long: Homeobox protein Hox-A9a (283 aa).

2 disordered regions span residues Val-25–Ser-54 and Glu-162–Gly-181. A DNA-binding region (homeobox) is located at residues Thr-216–Asn-275.

Belongs to the Abd-B homeobox family.

The protein resides in the nucleus. Functionally, sequence-specific transcription factor which is part of a developmental regulatory system that provides cells with specific positional identities on the anterior-posterior axis. The chain is Homeobox protein Hox-A9a (hoxa9a) from Takifugu rubripes (Japanese pufferfish).